A 217-amino-acid chain; its full sequence is MLNISIAIDGPAGAGKSTIAKIIGNKLNIMYINTGSMYRAVTLMALKNNIEPYDIESLKALINSMNISFNGNNIIVNGKDLEEDIRMPIINNNVSKYAAVEEVRELLVSMQQNISKKYNVVMDGRDIGTVVLKDAPYKFFITASAEVRAKRRLKELEEKGINISFQDVLKEIKERDYIDSNRKVNPLKQSKDAILIDTSNFTIEEVVDKICNIIKRD.

ATP is bound at residue 10–18 (GPAGAGKST).

Belongs to the cytidylate kinase family. Type 1 subfamily.

It is found in the cytoplasm. It catalyses the reaction CMP + ATP = CDP + ADP. It carries out the reaction dCMP + ATP = dCDP + ADP. This chain is Cytidylate kinase, found in Clostridium botulinum (strain Langeland / NCTC 10281 / Type F).